We begin with the raw amino-acid sequence, 1333 residues long: Xanthine dehydrogenase/oxidase (1333 aa).

The region spanning 4–91 (DKLVFFVNGR…HVAVTTVEGI (88 aa)) is the 2Fe-2S ferredoxin-type domain. The [2Fe-2S] cluster site is built by Cys-43, Cys-48, Cys-51, Cys-73, Cys-113, Cys-116, Cys-148, and Cys-150. Positions 229–414 (FEGERVTWIQ…LSIEIPYSRE (186 aa)) constitute an FAD-binding PCMH-type domain. Residues 257–264 (LVVGNTEI), Phe-337, 347–351 (SVGGN), Asp-360, Leu-404, and Lys-422 each bind FAD. 2 disulfides stabilise this stretch: Cys-509–Cys-1318 and Cys-536–Cys-993. Mo-molybdopterin is bound by residues Gln-768 and Phe-799. Substrate is bound by residues Glu-803 and Arg-881. Residue Arg-913 coordinates Mo-molybdopterin. 2 residues coordinate substrate: Phe-915 and Thr-1011. Ala-1080 contacts Mo-molybdopterin. Glu-1262 serves as the catalytic Proton acceptor.

Belongs to the xanthine dehydrogenase family. Homodimer. Interacts with BTN1A1. It depends on [2Fe-2S] cluster as a cofactor. FAD is required as a cofactor. The cofactor is Mo-molybdopterin. Subject to partial proteolysis; this alters the enzyme from the dehydrogenase form (D) to the oxidase form (O). In terms of processing, contains sulfhydryl groups that are easily oxidized (in vitro); this alters the enzyme from the dehydrogenase form (D) to the oxidase form (O). Detected in milk (at protein level).

It localises to the cytoplasm. It is found in the peroxisome. Its subcellular location is the secreted. The catalysed reaction is xanthine + NAD(+) + H2O = urate + NADH + H(+). It catalyses the reaction hypoxanthine + NAD(+) + H2O = xanthine + NADH + H(+). The enzyme catalyses xanthine + O2 + H2O = urate + H2O2. Its activity is regulated as follows. Can be converted from the dehydrogenase form (D) to the oxidase form (O) irreversibly by proteolysis or reversibly through the oxidation of sulfhydryl groups. In terms of biological role, key enzyme in purine degradation. Catalyzes the oxidation of hypoxanthine to xanthine. Catalyzes the oxidation of xanthine to uric acid. Contributes to the generation of reactive oxygen species. Has also low oxidase activity towards aldehydes (in vitro). The polypeptide is Xanthine dehydrogenase/oxidase (XDH) (Homo sapiens (Human)).